The sequence spans 327 residues: MYQSLMTVRETQIAIKEVKTFFEDQLAKRLGLFRVSAPLFVTKKSGLNDHLNGVERPIEFDMLHSGEELEIVHSLAKWKRFALHEYGYEAGEGLYTNMNAIRRDEELDATHSIYVDQWDWEKIVQKEWRTVEYLQETVRTIYGIFKDLEDHLFEKYPFLGKYLPEDIAFITSQELEDKYPELTPKEREHAIAKEYGAVFIIGIGDVLRSGEKHDGRAADYDDWKLNGDILFWHPVLQSSFELSSMGIRVDSQSLDEQLTKAGEDFKRDYDFHKGILEDVLPLTIGGGIGQSRMCMYFLRKAHIGEVQSSVWPDEMREACKKENIHLF.

It belongs to the class-II aminoacyl-tRNA synthetase family. AsnA subfamily.

The protein localises to the cytoplasm. It catalyses the reaction L-aspartate + NH4(+) + ATP = L-asparagine + AMP + diphosphate + H(+). It participates in amino-acid biosynthesis; L-asparagine biosynthesis; L-asparagine from L-aspartate (ammonia route): step 1/1. In Bacillus cytotoxicus (strain DSM 22905 / CIP 110041 / 391-98 / NVH 391-98), this protein is Aspartate--ammonia ligase.